The following is a 254-amino-acid chain: Type III pantothenate kinase (254 aa).

Residue 6–13 (DVGNTNIV) coordinates ATP. Residues Phe-100 and 107–110 (GADR) contribute to the substrate site. Asp-109 serves as the catalytic Proton acceptor. Residue Asp-129 participates in K(+) binding. Residue Thr-132 coordinates ATP. Thr-184 provides a ligand contact to substrate.

It belongs to the type III pantothenate kinase family. Homodimer. Requires NH4(+) as cofactor. The cofactor is K(+).

The protein resides in the cytoplasm. The enzyme catalyses (R)-pantothenate + ATP = (R)-4'-phosphopantothenate + ADP + H(+). It functions in the pathway cofactor biosynthesis; coenzyme A biosynthesis; CoA from (R)-pantothenate: step 1/5. In terms of biological role, catalyzes the phosphorylation of pantothenate (Pan), the first step in CoA biosynthesis. In Moorella thermoacetica (strain ATCC 39073 / JCM 9320), this protein is Type III pantothenate kinase.